Here is an 88-residue protein sequence, read N- to C-terminus: Putative carnobacteriocin-BM1 immunity protein (88 aa).

Its function is as follows. Could impart immunity to carnobacteriocin-BM1 to naturally sensitive host strains. This chain is Putative carnobacteriocin-BM1 immunity protein, found in Carnobacterium maltaromaticum (Carnobacterium piscicola).